The following is a 271-amino-acid chain: S-adenosylmethionine decarboxylase proenzyme (271 aa).

Catalysis depends on Ser121, which acts as the Schiff-base intermediate with substrate; via pyruvic acid. Ser121 is subject to Pyruvic acid (Ser); by autocatalysis. His126 serves as the catalytic Proton acceptor; for processing activity. Residue Cys149 is the Proton donor; for catalytic activity of the active site.

This sequence belongs to the prokaryotic AdoMetDC family. Type 2 subfamily. As to quaternary structure, heterooctamer of four alpha and four beta chains arranged as a tetramer of alpha/beta heterodimers. Requires pyruvate as cofactor. Is synthesized initially as an inactive proenzyme. Formation of the active enzyme involves a self-maturation process in which the active site pyruvoyl group is generated from an internal serine residue via an autocatalytic post-translational modification. Two non-identical subunits are generated from the proenzyme in this reaction, and the pyruvate is formed at the N-terminus of the alpha chain, which is derived from the carboxyl end of the proenzyme. The post-translation cleavage follows an unusual pathway, termed non-hydrolytic serinolysis, in which the side chain hydroxyl group of the serine supplies its oxygen atom to form the C-terminus of the beta chain, while the remainder of the serine residue undergoes an oxidative deamination to produce ammonia and the pyruvoyl group blocking the N-terminus of the alpha chain.

It catalyses the reaction S-adenosyl-L-methionine + H(+) = S-adenosyl 3-(methylsulfanyl)propylamine + CO2. The protein operates within amine and polyamine biosynthesis; S-adenosylmethioninamine biosynthesis; S-adenosylmethioninamine from S-adenosyl-L-methionine: step 1/1. Its function is as follows. Catalyzes the decarboxylation of S-adenosylmethionine to S-adenosylmethioninamine (dcAdoMet), the propylamine donor required for the synthesis of the polyamines spermine and spermidine from the diamine putrescine. The chain is S-adenosylmethionine decarboxylase proenzyme from Clostridium beijerinckii (strain ATCC 51743 / NCIMB 8052) (Clostridium acetobutylicum).